We begin with the raw amino-acid sequence, 147 residues long: UPF0306 protein YhbP (147 aa).

The protein belongs to the UPF0306 family.

The polypeptide is UPF0306 protein YhbP (Escherichia coli (strain K12 / MC4100 / BW2952)).